Here is a 380-residue protein sequence, read N- to C-terminus: Alcohol dehydrogenase 1 (380 aa).

C48, T50, H70, C100, C103, C106, C114, and C178 together coordinate Zn(2+). An alcohol contacts are provided by T50 and H70. Residue T50 participates in NAD(+) binding. NAD(+) is bound by residues G203 to G208, D227, R232, T273, V296, V296 to V298, F323, and R373.

It belongs to the zinc-containing alcohol dehydrogenase family. In terms of assembly, homodimer. Homotetramer. Zn(2+) is required as a cofactor.

The protein localises to the cytoplasm. It catalyses the reaction a primary alcohol + NAD(+) = an aldehyde + NADH + H(+). It carries out the reaction a secondary alcohol + NAD(+) = a ketone + NADH + H(+). The protein is Alcohol dehydrogenase 1 (ADH1) of Solanum tuberosum (Potato).